The following is an 84-amino-acid chain: Beta-cardiotoxin CTX23 (84 aa).

The N-terminal stretch at 1-21 (MKTLLLTLVVVTIVCLDLGYT) is a signal peptide. Disulfide bonds link Cys24–Cys43, Cys36–Cys61, Cys65–Cys76, and Cys77–Cys82.

This sequence belongs to the three-finger toxin family. Short-chain subfamily. Aminergic toxin sub-subfamily. In terms of tissue distribution, expressed by the venom gland.

It is found in the secreted. Its function is as follows. Acts as a beta-blocker by binding to beta-1 and beta-2 adrenergic receptors (ADRB1 and ADRB2). It dose-dependently decreases the heart rate (bradycardia), whereas conventional cardiotoxins increases it. At 100 mg/kg, intraperitoneal injection into mice provokes labored breathing, impaired locomotion, lack of response to external stimuli, and death (after 30 minutes). The chain is Beta-cardiotoxin CTX23 from Ophiophagus hannah (King cobra).